A 361-amino-acid polypeptide reads, in one-letter code: Phosphate acyltransferase (361 aa).

This sequence belongs to the PlsX family. Homodimer. Probably interacts with PlsY.

It is found in the cytoplasm. The enzyme catalyses a fatty acyl-[ACP] + phosphate = an acyl phosphate + holo-[ACP]. It participates in lipid metabolism; phospholipid metabolism. Its function is as follows. Catalyzes the reversible formation of acyl-phosphate (acyl-PO(4)) from acyl-[acyl-carrier-protein] (acyl-ACP). This enzyme utilizes acyl-ACP as fatty acyl donor, but not acyl-CoA. The polypeptide is Phosphate acyltransferase (Anaeromyxobacter dehalogenans (strain 2CP-C)).